Here is a 221-residue protein sequence, read N- to C-terminus: Transcription factor otaR1 (221 aa).

Residues 109-146 (ASRSRPAFSTPASRPGLSSAKSPSLGATSPGSMDRSEE) are disordered. Residues 127–139 (SAKSPSLGATSPG) are compositionally biased toward polar residues. A basic motif region spans residues 152-192 (KKYHEKYKERNRLAAGRSRQKQADLINLLQAEQQEEERRRK). The bZIP domain maps to 152–215 (KKYHEKYKER…VDMKQELQHH (64 aa)). The interval 198–212 (IANMQKELVDMKQEL) is leucine-zipper.

It is found in the nucleus. Its function is as follows. Transcription factor; part of the gene cluster that mediates the biosynthesis of ochratoxin A (OTA), a mycotoxin demonstrated to have nephrotoxic, immunotoxic, genotoxic, neurotoxic, and teratogenic properties. Positively regulates the expression of the OTA biosynthetic genes and subsequent production of OTA. Probably binds to conserved 5'-ACGT-3' bZIP binding motifs found in multiple copies (3 to 4) in the promoters of the OTA biosynthetic genes. Acts not only as a pathway-specific regulator of the OTA cluster but also binds at other chromosomal positions outside the OTA cluster and can act as a broad regulator. Negatively regulates pathogenicity and plays a critical role in tolerance to reactive oxygen species (ROS). This Aspergillus niger (strain ATCC MYA-4892 / CBS 513.88 / FGSC A1513) protein is Transcription factor otaR1.